Reading from the N-terminus, the 79-residue chain is Small ribosomal subunit protein bS18 (79 aa).

Belongs to the bacterial ribosomal protein bS18 family. In terms of assembly, part of the 30S ribosomal subunit. Forms a tight heterodimer with protein bS6.

In terms of biological role, binds as a heterodimer with protein bS6 to the central domain of the 16S rRNA, where it helps stabilize the platform of the 30S subunit. This is Small ribosomal subunit protein bS18 (rpsR) from Bacillus subtilis (strain 168).